The sequence spans 347 residues: Protein RecA (347 aa).

An ATP-binding site is contributed by 65–72 (GPESSGKT). Residues 327 to 336 (KFEPTELSRE) show a composition bias toward basic and acidic residues. A disordered region spans residues 327 to 347 (KFEPTELSREEGDEDTLEDAM). Positions 337–347 (EGDEDTLEDAM) are enriched in acidic residues.

The protein belongs to the RecA family.

The protein resides in the cytoplasm. Can catalyze the hydrolysis of ATP in the presence of single-stranded DNA, the ATP-dependent uptake of single-stranded DNA by duplex DNA, and the ATP-dependent hybridization of homologous single-stranded DNAs. It interacts with LexA causing its activation and leading to its autocatalytic cleavage. This is Protein RecA from Xylella fastidiosa (strain M12).